The primary structure comprises 205 residues: Phosphoenolpyruvate guanylyltransferase (205 aa).

Phosphoenolpyruvate contacts are provided by Thr-137, Gly-153, and Ser-156.

It belongs to the CofC family.

The catalysed reaction is phosphoenolpyruvate + GTP + H(+) = enolpyruvoyl-2-diphospho-5'-guanosine + diphosphate. It participates in cofactor biosynthesis; coenzyme F420 biosynthesis. Guanylyltransferase that catalyzes the activation of phosphoenolpyruvate (PEP) as enolpyruvoyl-2-diphospho-5'-guanosine, via the condensation of PEP with GTP. It is involved in the biosynthesis of coenzyme F420, a hydride carrier cofactor. The protein is Phosphoenolpyruvate guanylyltransferase of Rubrobacter xylanophilus (strain DSM 9941 / JCM 11954 / NBRC 16129 / PRD-1).